A 653-amino-acid polypeptide reads, in one-letter code: MLQILNNANDKIQYKLNDFSDLTPSFKIKSGFFTIHRINYEKLEENEEEKPRQISAFDIETNGREIFFGVYDGSEYKYVIIRKPEDVKNALDLLTEETYFYGDYDLPVSLANYVLLGKHSKFAKKITGENYFTTKNLRIKRYKNFYKILYNGRSINSINLLQFYSESLYEAYSRYYTKLQEMGFQVFDEQTMKEWKEDKEKRANFDKLDFNDPKTIQEIARYNKLDVIATYQLALLKNSLFGIKVKSTLPRTAITYIISQVQSEFVKGLRSYTEIELTLKRLYKGGLFDSNELGKFKKVYKYDVNSMYPFMMSWLPELELVETQKGFEVNEEPLLKGTQFNEDAKYVYIYKITLKQDRKYVASKANGMLLRMMYNRGSFFDFELADEKHELIPDIKIVGQYYTMKFKITKHRIFKDVIYNLYNKRLQLKKEKNPLEKVYKLILNSSYGKFGERIGFNAKFQNVIYASMITALGRTFIQNVDPNAISYLTDSVISKAPIKSELVGDQLGQLKQEGVGEAIVIGNGQYILNDPQEKMIKLRGFNVDESIAEKIIEYVGNYLAKGKIVRVQIPTKIMIRNLQQYKILAEKDSNVLMGMLSNQIKIFTPLNTKQRYTYNVHWFGSMFRDEQEHKEYRKTWEKYIETIEPIDLNSILS.

It belongs to the DNA polymerase type-B family.

The catalysed reaction is DNA(n) + a 2'-deoxyribonucleoside 5'-triphosphate = DNA(n+1) + diphosphate. In terms of biological role, replicates viral genomic DNA. The chain is DNA polymerase from Acidianus convivator (ABV).